Here is a 614-residue protein sequence, read N- to C-terminus: DNA mismatch repair protein MutL (614 aa).

The protein belongs to the DNA mismatch repair MutL/HexB family.

Functionally, this protein is involved in the repair of mismatches in DNA. It is required for dam-dependent methyl-directed DNA mismatch repair. May act as a 'molecular matchmaker', a protein that promotes the formation of a stable complex between two or more DNA-binding proteins in an ATP-dependent manner without itself being part of a final effector complex. This Chlorobium phaeovibrioides (strain DSM 265 / 1930) (Prosthecochloris vibrioformis (strain DSM 265)) protein is DNA mismatch repair protein MutL.